We begin with the raw amino-acid sequence, 578 residues long: Alpha-(1,6)-fucosyltransferase (578 aa).

Topologically, residues 1–9 (MRPWTGSWR) are cytoplasmic. A helical; Signal-anchor for type II membrane protein transmembrane segment spans residues 10 to 30 (WIMLILFAWGTLLFYIGGHLV). Residues 31-578 (RDNENPDHSS…KYPTYQEAEK (548 aa)) lie on the Lumenal side of the membrane. 3 disulfide bridges follow: C207–C269, C215–C233, and C221–C225. A GT23 domain is found at 209–496 (KAKKLVCNIN…PDASAHFHSL (288 aa)). The short motif at 302-308 (PRPPYLP) is the SH3-binding element. Residues 368–369 (RR) form an important for donor substrate binding region. C468 and C475 form a disulfide bridge. Positions 505-566 (QNAHNQLAIY…PSYKVKEKIE (62 aa)) constitute an SH3 domain.

It belongs to the glycosyltransferase 23 family.

The protein resides in the golgi apparatus. It is found in the golgi stack membrane. It carries out the reaction N(4)-{beta-D-GlcNAc-(1-&gt;2)-alpha-D-Man-(1-&gt;3)-[beta-D-GlcNAc-(1-&gt;2)-alpha-D-Man-(1-&gt;6)]-beta-D-Man-(1-&gt;4)-beta-D-GlcNAc-(1-&gt;4)-beta-D-GlcNAc}-L-asparaginyl-[protein] + GDP-beta-L-fucose = an N(4)-{beta-D-GlcNAc-(1-&gt;2)-alpha-D-Man-(1-&gt;3)-[beta-D-GlcNAc-(1-&gt;2)-alpha-D-Man-(1-&gt;6)]-beta-D-Man-(1-&gt;4)-beta-D-GlcNAc-(1-&gt;4)-[alpha-L-Fuc-(1-&gt;6)]-beta-D-GlcNAc}-L-asparaginyl-[protein] + GDP + H(+). Its pathway is protein modification; protein glycosylation. Functionally, catalyzes the addition of fucose in alpha 1-6 linkage to the first GlcNAc residue, next to the peptide chains in N-glycans. The sequence is that of Alpha-(1,6)-fucosyltransferase (fut8) from Xenopus tropicalis (Western clawed frog).